The following is a 313-amino-acid chain: Ribonuclease HIII (313 aa).

The segment at 62-88 is disordered; it reads AERWTADAETPAPKKPASKKSIPSVYQ. Positions 96–312 constitute an RNase H type-2 domain; the sequence is MSVIGSDEVG…TQKAKRIASK (217 aa). D102, E103, and D207 together coordinate a divalent metal cation.

Belongs to the RNase HII family. RnhC subfamily. It depends on Mn(2+) as a cofactor. Requires Mg(2+) as cofactor.

It is found in the cytoplasm. The catalysed reaction is Endonucleolytic cleavage to 5'-phosphomonoester.. In terms of biological role, endonuclease that specifically degrades the RNA of RNA-DNA hybrids. The chain is Ribonuclease HIII from Bacillus licheniformis (strain ATCC 14580 / DSM 13 / JCM 2505 / CCUG 7422 / NBRC 12200 / NCIMB 9375 / NCTC 10341 / NRRL NRS-1264 / Gibson 46).